Reading from the N-terminus, the 256-residue chain is N-acetylglucosaminyldiphosphoundecaprenol N-acetyl-beta-D-mannosaminyltransferase (256 aa).

This sequence belongs to the glycosyltransferase 26 family. TagA/TarA subfamily.

The catalysed reaction is UDP-N-acetyl-alpha-D-mannosamine + N-acetyl-alpha-D-glucosaminyl-di-trans,octa-cis-undecaprenyl diphosphate = N-acetyl-beta-D-mannosaminyl-(1-&gt;4)-N-acetyl-alpha-D-glucosaminyl di-trans,octa-cis-undecaprenyl diphosphate + UDP + H(+). Its pathway is cell wall biogenesis; poly(glycerol phosphate) teichoic acid biosynthesis. In terms of biological role, catalyzes the conversion of GlcNAc-PP-undecaprenol into ManNAc-GlcNAc-PP-undecaprenol, the first committed lipid intermediate in the de novo synthesis of teichoic acid. The protein is N-acetylglucosaminyldiphosphoundecaprenol N-acetyl-beta-D-mannosaminyltransferase of Bacillus subtilis (strain 168).